The following is a 369-amino-acid chain: Probable dual-specificity RNA methyltransferase RlmN (369 aa).

Glu98 serves as the catalytic Proton acceptor. Positions 106–341 (STSRNTLCIS…VTVRKSRGAD (236 aa)) constitute a Radical SAM core domain. Cys113 and Cys346 are joined by a disulfide. Residues Cys120, Cys124, and Cys127 each contribute to the [4Fe-4S] cluster site. Residues 171–172 (GE), Ser204, 227–229 (SLH), and Asn303 contribute to the S-adenosyl-L-methionine site. Residue Cys346 is the S-methylcysteine intermediate of the active site.

It belongs to the radical SAM superfamily. RlmN family. [4Fe-4S] cluster serves as cofactor.

It is found in the cytoplasm. The catalysed reaction is adenosine(2503) in 23S rRNA + 2 reduced [2Fe-2S]-[ferredoxin] + 2 S-adenosyl-L-methionine = 2-methyladenosine(2503) in 23S rRNA + 5'-deoxyadenosine + L-methionine + 2 oxidized [2Fe-2S]-[ferredoxin] + S-adenosyl-L-homocysteine. It catalyses the reaction adenosine(37) in tRNA + 2 reduced [2Fe-2S]-[ferredoxin] + 2 S-adenosyl-L-methionine = 2-methyladenosine(37) in tRNA + 5'-deoxyadenosine + L-methionine + 2 oxidized [2Fe-2S]-[ferredoxin] + S-adenosyl-L-homocysteine. In terms of biological role, specifically methylates position 2 of adenine 2503 in 23S rRNA and position 2 of adenine 37 in tRNAs. In Chloroherpeton thalassium (strain ATCC 35110 / GB-78), this protein is Probable dual-specificity RNA methyltransferase RlmN.